The primary structure comprises 883 residues: Alanine--tRNA ligase (883 aa).

The Zn(2+) site is built by His-562, His-566, Cys-675, and His-679.

This sequence belongs to the class-II aminoacyl-tRNA synthetase family. The cofactor is Zn(2+).

It localises to the cytoplasm. It catalyses the reaction tRNA(Ala) + L-alanine + ATP = L-alanyl-tRNA(Ala) + AMP + diphosphate. Catalyzes the attachment of alanine to tRNA(Ala) in a two-step reaction: alanine is first activated by ATP to form Ala-AMP and then transferred to the acceptor end of tRNA(Ala). Also edits incorrectly charged Ser-tRNA(Ala) and Gly-tRNA(Ala) via its editing domain. The polypeptide is Alanine--tRNA ligase (Ruegeria sp. (strain TM1040) (Silicibacter sp.)).